The chain runs to 91 residues: CLAVATA3/ESR (CLE)-related protein 27 (91 aa).

An N-terminal signal peptide occupies residues 1 to 35 (MTHAREWRSSLTTTLLMVILLSYMLHLFCVYSRVG). 2 positions are modified to hydroxyproline: Pro83 and Pro86. O-linked (Ara...) hydroxyproline glycosylation occurs at Pro86.

Belongs to the CLV3/ESR signal peptide family. The O-glycosylation (arabinosylation) of the hydroxyproline Pro-86 enhances binding affinity of the CLE27p peptide for its receptor. In terms of tissue distribution, mostly expressed in apex, and, to a lower extent, in roots, leaves, flowers and siliques.

It is found in the secreted. Its subcellular location is the extracellular space. In terms of biological role, extracellular signal peptide that regulates cell fate. Represses root apical meristem maintenance. The protein is CLAVATA3/ESR (CLE)-related protein 27 of Arabidopsis thaliana (Mouse-ear cress).